A 623-amino-acid chain; its full sequence is Chaperone protein HtpG (623 aa).

The interval 1–336 (MVSKQQTMGF…ASDLPLNISR (336 aa)) is a; substrate-binding. The b stretch occupies residues 337 to 550 (EILQDNKQVE…EQDMGLEMQR (214 aa)). The tract at residues 551-623 (ILQAAGQQVP…NRVNRLLVSS (73 aa)) is c.

This sequence belongs to the heat shock protein 90 family. In terms of assembly, homodimer.

It localises to the cytoplasm. Its function is as follows. Molecular chaperone. Has ATPase activity. This chain is Chaperone protein HtpG, found in Legionella pneumophila (strain Paris).